The primary structure comprises 490 residues: Probable cytochrome P450 518B1 (490 aa).

The chain crosses the membrane as a helical span at residues 2–22 (LTNIIILIILYLFYDFCYKNF). Cys-437 contacts heme.

This sequence belongs to the cytochrome P450 family. Heme serves as cofactor.

The protein localises to the membrane. The chain is Probable cytochrome P450 518B1 (cyp518B1) from Dictyostelium discoideum (Social amoeba).